Here is a 555-residue protein sequence, read N- to C-terminus: Glutamine--tRNA ligase (555 aa).

The 'HIGH' region signature appears at 34 to 44 (PEPNGYLHIGH). Residues 35–37 (EPN) and 41–47 (HIGHAKS) contribute to the ATP site. The L-glutamine site is built by Asp67 and Tyr212. ATP-binding positions include Thr231, 261 to 262 (RL), and 269 to 271 (MSK). Positions 268–272 (IMSKR) match the 'KMSKS' region motif.

The protein belongs to the class-I aminoacyl-tRNA synthetase family. As to quaternary structure, monomer.

Its subcellular location is the cytoplasm. The catalysed reaction is tRNA(Gln) + L-glutamine + ATP = L-glutaminyl-tRNA(Gln) + AMP + diphosphate. This Erwinia tasmaniensis (strain DSM 17950 / CFBP 7177 / CIP 109463 / NCPPB 4357 / Et1/99) protein is Glutamine--tRNA ligase.